We begin with the raw amino-acid sequence, 114 residues long: uncharacterized protein (114 aa).

The tract at residues 1–24 (MFGACYKQPLKPSGSEPPAEECRM) is disordered.

Expressed in kidney and liver.

This is an uncharacterized protein from Homo sapiens (Human).